We begin with the raw amino-acid sequence, 857 residues long: Envelope glycoprotein B (857 aa).

Residues 1–21 form the signal peptide; that stretch reads MTRRRVLSVVVLLAALACRLG. Topologically, residues 22-732 are virion surface; the sequence is AQTPEQPAPP…SGFISFFKNP (711 aa). Intrachain disulfides connect Cys51–Cys528, Cys68–Cys484, Cys141–Cys206, Cys295–Cys342, and Cys551–Cys588. Asn76 carries N-linked (GlcNAc...) asparagine; by host glycosylation. The interval 108–114 is involved in fusion and/or binding to host membrane; it reads IYNGWYA. N-linked (GlcNAc...) asparagine; by host glycosylation is present at Asn163. Residues 192–200 form an involved in fusion and/or binding to host membrane region; sequence GWLIWTYRT. N-linked (GlcNAc...) asparagine; by host glycosylation is found at Asn290, Asn329, Asn348, and Asn395. A disordered region spans residues 398 to 452; sequence ELTTPTSSPPSSPSPPAPPAARGSTSAAVLRRRRRDAGNATTPVPPAAPGKSLGT. Residues 404–416 are compositionally biased toward pro residues; that stretch reads SSPPSSPSPPAPP. Residues Asn436, Asn563, and Asn629 are each glycosylated (N-linked (GlcNAc...) asparagine; by host). Hydrophobic membrane proximal region regions lie at residues 678-730 and 709-729; these read LDNA…SFFK and NLVSTVGGLFSSLVSGFISFF. A helical transmembrane segment spans residues 733–753; that stretch reads FGGMLILVLVAGVVILVISLT. Topologically, residues 754–857 are intravirion; the sequence is RRTRQMSQQP…ALLGEAETEF (104 aa). The interval 832–857 is disordered; the sequence is FPGLRRRRYHDPETAAALLGEAETEF. Over residues 845-857 the composition is skewed to low complexity; the sequence is TAAALLGEAETEF.

The protein belongs to the herpesviridae glycoprotein B family. Homotrimer; disulfide-linked. Binds to heparan sulfate proteoglycans. Interacts with gH/gL heterodimer. In terms of processing, a proteolytic cleavage by host furin generates two subunits that remain linked by disulfide bonds.

It localises to the virion membrane. Its subcellular location is the host cell membrane. The protein resides in the host endosome membrane. The protein localises to the host Golgi apparatus membrane. Functionally, envelope glycoprotein that forms spikes at the surface of virion envelope. Essential for the initial attachment to heparan sulfate moieties of the host cell surface proteoglycans. Involved in fusion of viral and cellular membranes leading to virus entry into the host cell. Following initial binding to its host receptors, membrane fusion is mediated by the fusion machinery composed at least of gB and the heterodimer gH/gL. May be involved in the fusion between the virion envelope and the outer nuclear membrane during virion egress. The chain is Envelope glycoprotein B from Epstein-Barr virus (strain GD1) (HHV-4).